The primary structure comprises 153 residues: ATP synthase subunit b' (153 aa).

Residues 20–40 (TLPLMAVQVVLLTFILNALFF) form a helical membrane-spanning segment.

Belongs to the ATPase B chain family. In terms of assembly, F-type ATPases have 2 components, F(1) - the catalytic core - and F(0) - the membrane proton channel. F(1) has five subunits: alpha(3), beta(3), gamma(1), delta(1), epsilon(1). F(0) has four main subunits: a(1), b(1), b'(1) and c(10-14). The alpha and beta chains form an alternating ring which encloses part of the gamma chain. F(1) is attached to F(0) by a central stalk formed by the gamma and epsilon chains, while a peripheral stalk is formed by the delta, b and b' chains.

It localises to the cellular thylakoid membrane. In terms of biological role, f(1)F(0) ATP synthase produces ATP from ADP in the presence of a proton or sodium gradient. F-type ATPases consist of two structural domains, F(1) containing the extramembraneous catalytic core and F(0) containing the membrane proton channel, linked together by a central stalk and a peripheral stalk. During catalysis, ATP synthesis in the catalytic domain of F(1) is coupled via a rotary mechanism of the central stalk subunits to proton translocation. Its function is as follows. Component of the F(0) channel, it forms part of the peripheral stalk, linking F(1) to F(0). The b'-subunit is a diverged and duplicated form of b found in plants and photosynthetic bacteria. The protein is ATP synthase subunit b' of Prochlorococcus marinus (strain NATL2A).